A 316-amino-acid chain; its full sequence is Pantothenate kinase (316 aa).

95–102 (GSVAVGKS) is a binding site for ATP.

This sequence belongs to the prokaryotic pantothenate kinase family.

It localises to the cytoplasm. It catalyses the reaction (R)-pantothenate + ATP = (R)-4'-phosphopantothenate + ADP + H(+). It functions in the pathway cofactor biosynthesis; coenzyme A biosynthesis; CoA from (R)-pantothenate: step 1/5. This Shigella dysenteriae serotype 1 (strain Sd197) protein is Pantothenate kinase.